The sequence spans 1496 residues: Synaptojanin-2 (1496 aa).

One can recognise an SAC domain in the interval Leu-120–Gly-444. The 80-residue stretch at Asp-906 to Lys-985 folds into the RRM domain. 6 disordered regions span residues Val-1047–Tyr-1083, Gly-1100–Gly-1149, Val-1205–Leu-1357, Ser-1393–Phe-1413, Glu-1442–Val-1461, and Arg-1468–Val-1496. The span at Ser-1063–Leu-1074 shows a compositional bias: low complexity. Residues Arg-1116–Thr-1130 show a composition bias toward pro residues. At Ser-1139 the chain carries Phosphoserine. A compositionally biased stretch (polar residues) spans Ser-1139–Gly-1149. Pro residues-rich tracts occupy residues Pro-1230 to Arg-1239 and Thr-1279 to Lys-1292. Low complexity predominate over residues Glu-1324–Pro-1338. Basic and acidic residues-rich tracts occupy residues Leu-1470 to Ser-1480 and Asn-1487 to Val-1496.

The protein belongs to the synaptojanin family. This sequence in the central section; belongs to the inositol 1,4,5-trisphosphate 5-phosphatase family. As to quaternary structure, binds to GRB2. Isoform 2A binds to SYNJ2BP/OMP25. As to expression, widely expressed. Isoforms 2B1 and 2B2 are concentrated at nerve terminals in brain and at spermatid manchette in testis.

It localises to the cytoplasm. The protein localises to the cell membrane. Its subcellular location is the presynapse. The protein resides in the cytoskeleton. It is found in the membrane raft. It localises to the mitochondrion. The catalysed reaction is a 1,2-diacyl-sn-glycero-3-phospho-(1D-myo-inositol-4,5-bisphosphate) + H2O = a 1,2-diacyl-sn-glycero-3-phospho-(1D-myo-inositol 4-phosphate) + phosphate. Functionally, inositol 5-phosphatase which may be involved in distinct membrane trafficking and signal transduction pathways. May mediate the inhibitory effect of Rac1 on endocytosis. The sequence is that of Synaptojanin-2 (Synj2) from Rattus norvegicus (Rat).